The sequence spans 907 residues: Nuclear receptor coactivator 7 (907 aa).

Residues 1–12 (METKEEKKERRQ) show a composition bias toward basic and acidic residues. A coiled-coil region spans residues 1–29 (METKEEKKERRQGYFARLKKKRQAKQNTE). Disordered stretches follow at residues 1–51 (METK…DDES), 63–83 (DNCK…RKKK), and 99–121 (YSTD…SQKP). A compositionally biased stretch (polar residues) spans 25–41 (KQNTETVSANSPGSPVS). Composition is skewed to basic and acidic residues over residues 68–78 (AGEKETVPEKE) and 99–116 (YSTD…EKKM). The 44-residue stretch at 125–168 (IEYTAGNQDTINSIALKFNITPNKLVELNKLFTHTIVPGQILFV) folds into the LysM domain. Disordered regions lie at residues 335 to 373 (LSKE…QSSE) and 401 to 443 (DPHV…MDRG). Residues 401–422 (DPHVKEPSEEKNVSDIRTKEDS) show a composition bias toward basic and acidic residues. A TLDc domain is found at 746-907 (ALLENMHIEQ…IQDVEVWTFE (162 aa)).

Belongs to the OXR1 family.

The protein resides in the nucleus. In terms of biological role, enhances the transcriptional activities of several nuclear receptors. This Gallus gallus (Chicken) protein is Nuclear receptor coactivator 7 (NCOA7).